A 416-amino-acid polypeptide reads, in one-letter code: Serine hydroxymethyltransferase (416 aa).

(6S)-5,6,7,8-tetrahydrofolate-binding positions include leucine 118 and 122–124 (GHL). An N6-(pyridoxal phosphate)lysine modification is found at lysine 226. (6S)-5,6,7,8-tetrahydrofolate is bound by residues glutamate 242 and 350–352 (SPF).

Belongs to the SHMT family. As to quaternary structure, homodimer. Pyridoxal 5'-phosphate is required as a cofactor.

It is found in the cytoplasm. It carries out the reaction (6R)-5,10-methylene-5,6,7,8-tetrahydrofolate + glycine + H2O = (6S)-5,6,7,8-tetrahydrofolate + L-serine. The protein operates within one-carbon metabolism; tetrahydrofolate interconversion. It functions in the pathway amino-acid biosynthesis; glycine biosynthesis; glycine from L-serine: step 1/1. Catalyzes the reversible interconversion of serine and glycine with tetrahydrofolate (THF) serving as the one-carbon carrier. This reaction serves as the major source of one-carbon groups required for the biosynthesis of purines, thymidylate, methionine, and other important biomolecules. Also exhibits THF-independent aldolase activity toward beta-hydroxyamino acids, producing glycine and aldehydes, via a retro-aldol mechanism. This Helicobacter pylori (strain ATCC 700392 / 26695) (Campylobacter pylori) protein is Serine hydroxymethyltransferase.